A 121-amino-acid polypeptide reads, in one-letter code: Small ribosomal subunit protein uS11 (121 aa).

The protein belongs to the universal ribosomal protein uS11 family. In terms of assembly, part of the 30S ribosomal subunit. Interacts with proteins S7 and S18. Binds to IF-3.

Functionally, located on the platform of the 30S subunit, it bridges several disparate RNA helices of the 16S rRNA. Forms part of the Shine-Dalgarno cleft in the 70S ribosome. The sequence is that of Small ribosomal subunit protein uS11 from Mycoplasmoides gallisepticum (strain R(low / passage 15 / clone 2)) (Mycoplasma gallisepticum).